Reading from the N-terminus, the 458-residue chain is Phosphoglucosamine mutase (458 aa).

The active-site Phosphoserine intermediate is serine 109. Mg(2+)-binding residues include serine 109, aspartate 251, aspartate 253, and aspartate 255. Serine 109 is modified (phosphoserine).

Belongs to the phosphohexose mutase family. Requires Mg(2+) as cofactor. In terms of processing, activated by phosphorylation.

The enzyme catalyses alpha-D-glucosamine 1-phosphate = D-glucosamine 6-phosphate. In terms of biological role, catalyzes the conversion of glucosamine-6-phosphate to glucosamine-1-phosphate. In Myxococcus xanthus (strain DK1622), this protein is Phosphoglucosamine mutase.